The sequence spans 121 residues: Ribonuclease P protein component (121 aa).

This sequence belongs to the RnpA family. As to quaternary structure, consists of a catalytic RNA component (M1 or rnpB) and a protein subunit.

The catalysed reaction is Endonucleolytic cleavage of RNA, removing 5'-extranucleotides from tRNA precursor.. In terms of biological role, RNaseP catalyzes the removal of the 5'-leader sequence from pre-tRNA to produce the mature 5'-terminus. It can also cleave other RNA substrates such as 4.5S RNA. The protein component plays an auxiliary but essential role in vivo by binding to the 5'-leader sequence and broadening the substrate specificity of the ribozyme. This is Ribonuclease P protein component from Oceanobacillus iheyensis (strain DSM 14371 / CIP 107618 / JCM 11309 / KCTC 3954 / HTE831).